The chain runs to 377 residues: tRNA-specific 2-thiouridylase MnmA (377 aa).

ATP-binding positions include 18 to 25 (AMSGGVDS) and Met-44. Cys-113 (nucleophile) is an active-site residue. Cys-113 and Cys-210 are oxidised to a cystine. Position 137 (Gly-137) interacts with ATP. An interaction with tRNA region spans residues 159–161 (RDQ). The active-site Cysteine persulfide intermediate is the Cys-210.

Belongs to the MnmA/TRMU family.

It localises to the cytoplasm. It catalyses the reaction S-sulfanyl-L-cysteinyl-[protein] + uridine(34) in tRNA + AH2 + ATP = 2-thiouridine(34) in tRNA + L-cysteinyl-[protein] + A + AMP + diphosphate + H(+). Its function is as follows. Catalyzes the 2-thiolation of uridine at the wobble position (U34) of tRNA, leading to the formation of s(2)U34. The chain is tRNA-specific 2-thiouridylase MnmA from Rhodospirillum rubrum (strain ATCC 11170 / ATH 1.1.1 / DSM 467 / LMG 4362 / NCIMB 8255 / S1).